Consider the following 229-residue polypeptide: GTP cyclohydrolase 1 (229 aa).

Positions 116, 119, and 187 each coordinate Zn(2+).

The protein belongs to the GTP cyclohydrolase I family. Toroid-shaped homodecamer, composed of two pentamers of five dimers.

It carries out the reaction GTP + H2O = 7,8-dihydroneopterin 3'-triphosphate + formate + H(+). It functions in the pathway cofactor biosynthesis; 7,8-dihydroneopterin triphosphate biosynthesis; 7,8-dihydroneopterin triphosphate from GTP: step 1/1. The sequence is that of GTP cyclohydrolase 1 from Synechococcus sp. (strain JA-3-3Ab) (Cyanobacteria bacterium Yellowstone A-Prime).